Reading from the N-terminus, the 128-residue chain is Ribonuclease P protein component (128 aa).

It belongs to the RnpA family. In terms of assembly, consists of a catalytic RNA component (M1 or rnpB) and a protein subunit.

It carries out the reaction Endonucleolytic cleavage of RNA, removing 5'-extranucleotides from tRNA precursor.. Functionally, RNaseP catalyzes the removal of the 5'-leader sequence from pre-tRNA to produce the mature 5'-terminus. It can also cleave other RNA substrates such as 4.5S RNA. The protein component plays an auxiliary but essential role in vivo by binding to the 5'-leader sequence and broadening the substrate specificity of the ribozyme. The sequence is that of Ribonuclease P protein component from Prochlorococcus marinus (strain AS9601).